Consider the following 98-residue polypeptide: MSMVYMNIMMAFTVSLVGLLMYRSHLMSSLLCLEGMMLSLFVMAALTILNSHFTLASMMPIILLVFAACEAALGLSLLVMVSNTYGTDYVQNLNLLQC.

Transmembrane regions (helical) follow at residues 1-21, 29-49, and 61-81; these read MSMV…GLLM, SLLC…LTIL, and IILL…LVMV.

The protein belongs to the complex I subunit 4L family. In terms of assembly, core subunit of respiratory chain NADH dehydrogenase (Complex I) which is composed of 45 different subunits.

The protein resides in the mitochondrion inner membrane. It catalyses the reaction a ubiquinone + NADH + 5 H(+)(in) = a ubiquinol + NAD(+) + 4 H(+)(out). Core subunit of the mitochondrial membrane respiratory chain NADH dehydrogenase (Complex I) which catalyzes electron transfer from NADH through the respiratory chain, using ubiquinone as an electron acceptor. Part of the enzyme membrane arm which is embedded in the lipid bilayer and involved in proton translocation. The sequence is that of NADH-ubiquinone oxidoreductase chain 4L (MT-ND4L) from Bos indicus (Zebu).